Consider the following 2227-residue polypeptide: Genome polyprotein (2227 aa).

Short sequence motifs ((L)YPX(n)L motif) lie at residues 167 to 171 and 200 to 205; these read YPHGL and YPVWEL. Residues 766–836 are involved in P1-2A pentamerization; it reads MMSRIAAGDL…PRKMKGLFSQ (71 aa). A helical membrane pass occupies residues 1011 to 1031; it reads TVEIINTVLCFVKSGILLYVI. Positions 1043–1070 are membrane-penetrating ability; that stretch reads IGLLRVMNYADIGCSVISCGKVFSKMLE. Residues 1127–1152 adopt a coiled-coil conformation; that stretch reads KKKDILNILKDNQQKIEKAIEEADNF. One can recognise an SF3 helicase domain in the interval 1204–1366; sequence HQKLKNLGSI…SFFKNPHNDM (163 aa). 1230 to 1237 provides a ligand contact to ATP; that stretch reads GKRGGGKS. Residues 1462 to 1482 traverse the membrane as a helical segment; it reads WVAVGAAVGILGVLVGGWFVY. Tyr-1499 bears the O-(5'-phospho-RNA)-tyrosine mark. One can recognise a Peptidase C3 domain in the interval 1514 to 1728; sequence DPVESQSTLE…VAKLVTQEMF (215 aa). Residues His-1563, Asp-1603, and Cys-1691 each act as for protease 3C activity in the active site. The 122-residue stretch at 1976-2097 folds into the RdRp catalytic domain; the sequence is DVGLDLDFSA…VFSRDVQIDN (122 aa).

It belongs to the picornaviridae polyprotein family. In terms of assembly, homodimer. Homomultimer; probably interacts with membranes in a multimeric form. Seems to assemble into amyloid-like fibers. As to quaternary structure, homodimer. Monomer. Interacts with protein 3CD. Interacts with host ACBD3. In terms of assembly, interacts with protein 3AB. As to quaternary structure, interacts with human MAVS. Homodimer; disulfide-linked. In terms of assembly, homopentamer. Homooligomer. As to quaternary structure, interacts with capsid protein VP2. Interacts with capsid protein VP3. Interacts with capsid protein VP1. Interacts with capsid protein VP3. In terms of assembly, interacts with capsid protein VP1. Interacts with capsid protein VP2. In terms of processing, specific enzymatic cleavages by viral protease in vivo yield a variety of precursors and mature proteins. Polyprotein processing intermediates are produced, such as P1-2A which is a functional precursor of the structural proteins, VP0 which is a VP4-VP2 precursor, VP1-2A precursor, 3ABC precursor which is a stable and catalytically active precursor of 3A, 3B and 3C proteins, 3AB and 3CD precursors. The assembly signal 2A is removed from VP1-2A by a host protease, possibly host Cathepsin L. This cleavage occurs over a region of 3 amino-acids probably generating VP1 proteins with heterogeneous C-termini. During virion maturation, immature virions are rendered infectious following cleavage of VP0 into VP4 and VP2. This maturation seems to be an autocatalytic event triggered by the presence of RNA in the capsid and is followed by a conformational change of the particle. Post-translationally, the assembly signal 2A is removed from VP1-2A by a host protease, possibly host Cathepsin L in naked virions. This cleavage does not occur in enveloped virions. This cleavage occurs over a region of 3 amino-acids probably generating VP1 proteins with heterogeneous C-termini. In terms of processing, VPg is uridylylated prior to priming replication into VPg-pUpU. Unlike other picornaviruses, does not seem to be myristoylated.

The protein localises to the virion. Its subcellular location is the host endosome. It is found in the host multivesicular body. The protein resides in the host membrane. It localises to the host mitochondrion outer membrane. The protein localises to the host cytoplasm. Its subcellular location is the host cytoplasmic vesicle membrane. The catalysed reaction is RNA(n) + a ribonucleoside 5'-triphosphate = RNA(n+1) + diphosphate. The enzyme catalyses a ribonucleoside 5'-triphosphate + H2O = a ribonucleoside 5'-diphosphate + phosphate + H(+). It carries out the reaction Selective cleavage of Gln-|-Gly bond in the poliovirus polyprotein. In other picornavirus reactions Glu may be substituted for Gln, and Ser or Thr for Gly.. Functionally, capsid proteins VP1, VP2, and VP3 form a closed capsid enclosing the viral positive strand RNA genome. All these proteins contain a beta-sheet structure called beta-barrel jelly roll. Together they form an icosahedral capsid (T=3) composed of 60 copies of each VP1, VP2, and VP3, with a diameter of approximately 300 Angstroms. VP1 is situated at the 12 fivefold axes, whereas VP2 and VP3 are located at the quasi-sixfold axes. The naked capsid interacts with the host receptor HAVCR1 to provide virion attachment to and probably entry into the target cell. In terms of biological role, VP0 precursor is a component of the immature procapsids. Its function is as follows. Plays a role in the assembly of the 12 pentamers into an icosahedral structure. Has not been detected in mature virions, supposedly owing to its small size. Precursor component of immature procapsids that corresponds to an extended form of the structural protein VP1. After maturation, possibly by the host Cathepsin L, the assembly signal 2A is cleaved to give rise to the mature VP1 protein. Functionally, functions as a viroporin. Affects membrane integrity and causes an increase in membrane permeability. Involved in host intracellular membrane rearrangements probably to give rise to the viral factories. Does not disrupt calcium homeostasis or glycoprotein trafficking. Antagonizes the innate immune response of the host by suppressing IFN-beta synthesis, which it achieves by interfering with the RIG-I/IFIH1 pathway. In terms of biological role, affects membrane integrity and causes an increase in membrane permeability. Its function is as follows. Associates with and induces structural rearrangements of intracellular membranes. Displays RNA-binding activity. The precursor 3ABC is targeted to the mitochondrial membrane where protease 3C activity cleaves and inhibits the host antiviral protein MAVS, thereby disrupting activation of IRF3 through the IFIH1/MDA5 pathway. In vivo, the protease activity of 3ABC precursor is more efficient in cleaving the 2BC precursor than that of protein 3C. The 3ABC precursor may therefore play a role in the proteolytic processing of the polyprotein. Possible viroporin. Functionally, interacts with the 3CD precursor and with RNA structures found at both the 5'- and 3'-termini of the viral genome. Since the 3AB precursor contains the hydrophobic domain 3A, it probably anchors the whole viral replicase complex to intracellular membranes on which viral RNA synthesis occurs. In terms of biological role, may serve as membrane anchor to the 3AB and 3ABC precursors via its hydrophobic domain. May interact with RNA. Its function is as follows. Acts as a primer for viral RNA replication and remains covalently bound to viral genomic RNA. VPg is uridylylated prior to priming replication into VPg-pUpU. The VPg-pUpU is then used as primer on the genomic RNA poly(A) by the RNA-dependent RNA polymerase to replicate the viral genome. Cysteine protease that generates mature viral proteins from the precursor polyprotein. In addition to its proteolytic activity, it binds to viral RNA, and thus influences viral genome replication. RNA and substrate bind cooperatively to the protease. Cleaves IKBKG/NEMO to impair innate immune signaling. Cleaves host PABPC1 which may participate in the switch of viral translation to RNA synthesis. Functionally, interacts with the 3AB precursor and with RNA structures found at both the 5'- and 3'-termini of the viral genome. Disrupts TLR3 signaling by degrading the host adapter protein TICAM1/TRIF. In terms of biological role, RNA-directed RNA polymerase 3D-POL replicates genomic and antigenomic RNA by recognizing replications specific signals. This chain is Genome polyprotein, found in Human hepatitis A virus genotype IA (isolate H2) (HHAV).